The chain runs to 495 residues: Tubulin epsilon and delta complex protein 1 (495 aa).

Positions glycine 355 to alanine 387 form a coiled coil. A disordered region spans residues cysteine 417 to alanine 440. Positions isoleucine 452–leucine 480 form a coiled coil.

Interacts with TEDC2. Found in a complex with TEDC1, TEDC2, TUBE1 and TUBD1.

It localises to the cell projection. The protein resides in the cilium. The protein localises to the cytoplasm. Its subcellular location is the cytoskeleton. It is found in the microtubule organizing center. It localises to the centrosome. The protein resides in the centriole. Its function is as follows. Acts as a positive regulator of ciliary hedgehog signaling. Required for centriole stability. May play a role in counteracting perturbation of actin filaments, such as after treatment with the actin depolymerizing microbial metabolite Chivosazole F. The chain is Tubulin epsilon and delta complex protein 1 from Homo sapiens (Human).